The following is a 398-amino-acid chain: uncharacterized protein (398 aa).

The next 2 helical transmembrane spans lie at 31-51 (VVFS…CLLF) and 56-76 (AFIT…FFGC).

It belongs to the chlamydial CPn_0129/CT_036/TC_0306 family.

Its subcellular location is the cell membrane. This is an uncharacterized protein from Chlamydia muridarum (strain MoPn / Nigg).